The chain runs to 326 residues: Large ribosomal subunit protein uL4 (326 aa).

The tract at residues 1 to 211 (MASCVVKNWQ…EKLKARWGSG (211 aa)) is large ribosomal subunit protein uL4. Disordered stretches follow at residues 44–76 (ARQG…ARAG) and 211–326 (GAAA…EDND). Basic residues predominate over residues 60-71 (GGRKPWRQKGTG). A unknown region spans residues 212 to 326 (AAAAAPTQAD…TAAAEEEDND (115 aa)). Residues 221–238 (DRLEDQAQAAEREARPVE) are compositionally biased toward basic and acidic residues. Low complexity-rich tracts occupy residues 252–279 (EAQA…QVQE) and 294–312 (QGQA…PPAG). Residues 313-326 (EEAETAAAEEEDND) show a composition bias toward acidic residues.

It belongs to the universal ribosomal protein uL4 family. Part of the 50S ribosomal subunit.

Its function is as follows. One of the primary rRNA binding proteins, this protein initially binds near the 5'-end of the 23S rRNA. It is important during the early stages of 50S assembly. It makes multiple contacts with different domains of the 23S rRNA in the assembled 50S subunit and ribosome. In terms of biological role, forms part of the polypeptide exit tunnel. In Synechococcus sp. (strain JA-3-3Ab) (Cyanobacteria bacterium Yellowstone A-Prime), this protein is Large ribosomal subunit protein uL4.